Reading from the N-terminus, the 548-residue chain is ATP synthase subunit alpha (548 aa).

172–179 (GDRKTGKT) is an ATP binding site. Residues 526–548 (AEAMDEADVEKESVKVRKPAPKK) form a disordered region.

Belongs to the ATPase alpha/beta chains family. As to quaternary structure, F-type ATPases have 2 components, CF(1) - the catalytic core - and CF(0) - the membrane proton channel. CF(1) has five subunits: alpha(3), beta(3), gamma(1), delta(1), epsilon(1). CF(0) has three main subunits: a(1), b(2) and c(9-12). The alpha and beta chains form an alternating ring which encloses part of the gamma chain. CF(1) is attached to CF(0) by a central stalk formed by the gamma and epsilon chains, while a peripheral stalk is formed by the delta and b chains.

The protein localises to the cell membrane. It catalyses the reaction ATP + H2O + 4 H(+)(in) = ADP + phosphate + 5 H(+)(out). Its function is as follows. Produces ATP from ADP in the presence of a proton gradient across the membrane. The alpha chain is a regulatory subunit. This is ATP synthase subunit alpha from Mycolicibacterium gilvum (strain PYR-GCK) (Mycobacterium gilvum (strain PYR-GCK)).